Here is a 323-residue protein sequence, read N- to C-terminus: uncharacterized protein (323 aa).

Tyrosine 59 (proton donor) is an active-site residue. Position 198-208 (198-208) interacts with NADP(+); sequence SPLAQGLLGGK.

Belongs to the aldo/keto reductase family. Aldo/keto reductase 2 subfamily.

This is an uncharacterized protein from Mycobacterium tuberculosis (strain CDC 1551 / Oshkosh).